A 121-amino-acid chain; its full sequence is Flagellar protein FliT (121 aa).

The interval 1–50 is required for homodimerization; that stretch reads MNNAPHLYFAWQQLVEKSQLMLRLATEEQWDELIASEMAYVNAVQEIAHL. Residues 60–98 form a fliD binding region; it reads MQEQLRPMLHLILDNESKVKQLLQIRMDELAKLVGQSSV.

The protein belongs to the FliT family. Homodimer. Interacts with FliD and FlhC.

The protein resides in the cytoplasm. It is found in the cytosol. In terms of biological role, dual-function protein that regulates the transcription of class 2 flagellar operons and that also acts as an export chaperone for the filament-capping protein FliD. As a transcriptional regulator, acts as an anti-FlhDC factor; it directly binds FlhC, thus inhibiting the binding of the FlhC/FlhD complex to class 2 promoters, resulting in decreased expression of class 2 flagellar operons. As a chaperone, effects FliD transition to the membrane by preventing its premature polymerization, and by directing it to the export apparatus. The chain is Flagellar protein FliT from Shigella flexneri serotype 5b (strain 8401).